A 556-amino-acid chain; its full sequence is DNA ligase (556 aa).

Residue glutamate 245 coordinates ATP. Lysine 247 acts as the N6-AMP-lysine intermediate in catalysis. Residues arginine 252, arginine 267, glutamate 296, phenylalanine 336, arginine 408, and lysine 414 each coordinate ATP.

This sequence belongs to the ATP-dependent DNA ligase family. It depends on Mg(2+) as a cofactor.

It catalyses the reaction ATP + (deoxyribonucleotide)n-3'-hydroxyl + 5'-phospho-(deoxyribonucleotide)m = (deoxyribonucleotide)n+m + AMP + diphosphate.. DNA ligase that seals nicks in double-stranded DNA during DNA replication, DNA recombination and DNA repair. The chain is DNA ligase from Methanosphaerula palustris (strain ATCC BAA-1556 / DSM 19958 / E1-9c).